The sequence spans 181 residues: Acireductone dioxygenase 2 (181 aa).

The Fe(2+) site is built by histidine 97, histidine 99, glutamate 103, and histidine 141. Residues histidine 97, histidine 99, glutamate 103, and histidine 141 each coordinate Ni(2+).

It belongs to the acireductone dioxygenase (ARD) family. As to quaternary structure, monomer. The cofactor is Fe(2+). Ni(2+) serves as cofactor.

The enzyme catalyses 1,2-dihydroxy-5-(methylsulfanyl)pent-1-en-3-one + O2 = 3-(methylsulfanyl)propanoate + CO + formate + 2 H(+). It catalyses the reaction 1,2-dihydroxy-5-(methylsulfanyl)pent-1-en-3-one + O2 = 4-methylsulfanyl-2-oxobutanoate + formate + 2 H(+). Its pathway is amino-acid biosynthesis; L-methionine biosynthesis via salvage pathway; L-methionine from S-methyl-5-thio-alpha-D-ribose 1-phosphate: step 5/6. Functionally, catalyzes 2 different reactions between oxygen and the acireductone 1,2-dihydroxy-3-keto-5-methylthiopentene (DHK-MTPene) depending upon the metal bound in the active site. Fe-containing acireductone dioxygenase (Fe-ARD) produces formate and 2-keto-4-methylthiobutyrate (KMTB), the alpha-ketoacid precursor of methionine in the methionine recycle pathway. Ni-containing acireductone dioxygenase (Ni-ARD) produces methylthiopropionate, carbon monoxide and formate, and does not lie on the methionine recycle pathway. The protein is Acireductone dioxygenase 2 of Pectobacterium atrosepticum (strain SCRI 1043 / ATCC BAA-672) (Erwinia carotovora subsp. atroseptica).